The primary structure comprises 243 residues: Segregation and condensation protein A (243 aa).

This sequence belongs to the ScpA family. As to quaternary structure, component of a cohesin-like complex composed of ScpA, ScpB and the Smc homodimer, in which ScpA and ScpB bind to the head domain of Smc. The presence of the three proteins is required for the association of the complex with DNA.

It localises to the cytoplasm. Its function is as follows. Participates in chromosomal partition during cell division. May act via the formation of a condensin-like complex containing Smc and ScpB that pull DNA away from mid-cell into both cell halves. This is Segregation and condensation protein A from Staphylococcus epidermidis (strain ATCC 35984 / DSM 28319 / BCRC 17069 / CCUG 31568 / BM 3577 / RP62A).